The following is a 191-amino-acid chain: dTTP/UTP pyrophosphatase (191 aa).

Asp-65 serves as the catalytic Proton acceptor.

It belongs to the Maf family. YhdE subfamily. A divalent metal cation serves as cofactor.

It is found in the cytoplasm. It carries out the reaction dTTP + H2O = dTMP + diphosphate + H(+). The enzyme catalyses UTP + H2O = UMP + diphosphate + H(+). Nucleoside triphosphate pyrophosphatase that hydrolyzes dTTP and UTP. May have a dual role in cell division arrest and in preventing the incorporation of modified nucleotides into cellular nucleic acids. This is dTTP/UTP pyrophosphatase from Leptospira biflexa serovar Patoc (strain Patoc 1 / Ames).